Consider the following 325-residue polypeptide: Palmitoyltransferase PFA3 (325 aa).

Over 1-8 (MHICSLIP) the chain is Cytoplasmic. A helical membrane pass occupies residues 9-29 (ILFPKLLTCGLALYSAVVLWL). A topological domain (lumenal) is located at residue lysine 30. Residues 31–51 (VSVIGSFIQGTVLLTLVPLIL) form a helical membrane-spanning segment. The Cytoplasmic portion of the chain corresponds to 52 to 147 (YAYFSTIAVG…PGCIGYNNHK (96 aa)). Positions 104 to 154 (RYCVKCKVWKPDRCHHCSACDKCYLRRDHHCVWFPGCIGYNNHKFFLHFLL) constitute a DHHC domain. Residues 148–168 (FFLHFLLYASVYAFWICIITT) form a helical membrane-spanning segment. Residues 169–188 (WDLVVWFRAHSYERELLNVH) lie on the Lumenal side of the membrane. The helical transmembrane segment at 189-209 (LVCLWALSAAATVALTAFCAF) threads the bilayer. Over 210-325 (NIYLVCKNET…TRFNSKRAVQ (116 aa)) the chain is Cytoplasmic.

Belongs to the DHHC palmitoyltransferase family. PFA3 subfamily. Autopalmitoylated.

Its subcellular location is the vacuole membrane. The catalysed reaction is L-cysteinyl-[protein] + hexadecanoyl-CoA = S-hexadecanoyl-L-cysteinyl-[protein] + CoA. Functionally, palmitoyltransferase specific for VAC8. Palmitoylates VAC8 at one or more of its N-terminal cysteine residues, which is required for its proper membrane localization. The sequence is that of Palmitoyltransferase PFA3 (PFA3) from Eremothecium gossypii (strain ATCC 10895 / CBS 109.51 / FGSC 9923 / NRRL Y-1056) (Yeast).